Here is a 103-residue protein sequence, read N- to C-terminus: Co-chaperonin GroES (103 aa).

The protein belongs to the GroES chaperonin family. As to quaternary structure, heptamer of 7 subunits arranged in a ring. Interacts with the chaperonin GroEL.

It is found in the cytoplasm. Together with the chaperonin GroEL, plays an essential role in assisting protein folding. The GroEL-GroES system forms a nano-cage that allows encapsulation of the non-native substrate proteins and provides a physical environment optimized to promote and accelerate protein folding. GroES binds to the apical surface of the GroEL ring, thereby capping the opening of the GroEL channel. This is Co-chaperonin GroES from Synechococcus sp. (strain CC9311).